The primary structure comprises 1499 residues: Multidrug resistance protein CDR2 (1499 aa).

The Cytoplasmic segment spans residues 1 to 511; that stretch reads MSTANTSLSQ…NFLRMKGDPS (511 aa). Residues 148–402 enclose the ABC transporter 1 domain; that stretch reads FTTEAINKLK…FENMGWKCPQ (255 aa). 6 helical membrane passes run 512–532, 546–566, 596–616, 621–641, 660–680, and 763–783; these read IPLISILSQLVMGLILASVFF, GALFFSVLFNAFSSLLEILSL, LPVKLLMTMSFNIVYYFMVNL, GNFFFYWLMCASCTLVMSHMF, VFLLAMIIYAGFVLPIPYILG, and FGITVAFAVFFLGVYVALTEF. At 784 to 1193 the chain is on the cytoplasmic side; it reads NKGAMQKGEI…TIVQDWRSPG (410 aa). Residues 857–1101 enclose the ABC transporter 2 domain; that stretch reads FFWRDLTYQV…MINYFEKYGA (245 aa). Residue 893–900 coordinates ATP; that stretch reads GASGAGKT. The next 6 helical transmembrane spans lie at 1194 to 1214, 1229 to 1249, 1279 to 1299, 1315 to 1335, 1354 to 1374, and 1465 to 1485; these read YIYSKLILVISSSLFIGFSFF, AVFMFFVPFTTFIDQMLPYFV, IPFQIVVGTISYFCWYYPVGL, LMWMLLTAFYVYTSTMGQLAI, LCLMFCGVLAGPNVIPGFWIF, and FGIFVAFIGINIILTIFFYWL.

This sequence belongs to the ABC transporter superfamily. ABCG family. PDR (TC 3.A.1.205) subfamily.

The protein localises to the membrane. Functionally, multidrug efflux transporter. Confers resistance to azole antifungal agents, to other antifungals (terbinafine, amorolfine) and to a variety of metabolic inhibitors. The chain is Multidrug resistance protein CDR2 (CDR2) from Candida albicans (strain SC5314 / ATCC MYA-2876) (Yeast).